The primary structure comprises 155 residues: Small ribosomal subunit protein uS7c (155 aa).

Belongs to the universal ribosomal protein uS7 family. In terms of assembly, part of the 30S ribosomal subunit.

Its subcellular location is the plastid. It localises to the chloroplast. One of the primary rRNA binding proteins, it binds directly to 16S rRNA where it nucleates assembly of the head domain of the 30S subunit. This Beta vulgaris (Sugar beet) protein is Small ribosomal subunit protein uS7c.